The sequence spans 1020 residues: Protein SCAR3 (1020 aa).

Disordered regions lie at residues 167 to 198, 351 to 382, and 802 to 827; these read NLSQGNKKFQKDKKHCKMKKKKTSSRSRDMSR, DEKPSYGEGIGGVDFHSKDNENDKSESGLRKR, and DYLSDNHSLSNSEPWEESSDSHGRKE. Over residues 174-191 the composition is skewed to basic residues; that stretch reads KFQKDKKHCKMKKKKTSS. Over residues 365–382 the composition is skewed to basic and acidic residues; that stretch reads FHSKDNENDKSESGLRKR. Over residues 802–814 the composition is skewed to polar residues; sequence DYLSDNHSLSNSE. The 19-residue stretch at 954–972 folds into the WH2 domain; it reads ETGDFLQQIRTQQFNLRPV.

The protein belongs to the SCAR/WAVE family. In terms of assembly, binds BRK1. Interacts with SPK1, ABI1, ABI2, ABI3 and ABI4. In terms of tissue distribution, expressed in expanding cotyledons, expanding leaves and expanding siliques containing developing embryos. Detected in unopened flower buds. Reduced expression in mature leaves and mature cotyledons.

The protein resides in the cytoplasm. It localises to the cytoskeleton. Its function is as follows. Involved in regulation of actin and microtubule organization. Part of a WAVE complex that activates the Arp2/3 complex. Regulates trichome branch positioning and expansion. This chain is Protein SCAR3 (SCAR3), found in Arabidopsis thaliana (Mouse-ear cress).